Reading from the N-terminus, the 192-residue chain is Large ribosomal subunit protein uL18 (192 aa).

Belongs to the universal ribosomal protein uL18 family. As to quaternary structure, part of the 50S ribosomal subunit. Contacts the 5S and 23S rRNAs.

In terms of biological role, this is one of the proteins that bind and probably mediate the attachment of the 5S RNA into the large ribosomal subunit, where it forms part of the central protuberance. In Methanothermobacter thermautotrophicus (strain ATCC 29096 / DSM 1053 / JCM 10044 / NBRC 100330 / Delta H) (Methanobacterium thermoautotrophicum), this protein is Large ribosomal subunit protein uL18.